A 238-amino-acid polypeptide reads, in one-letter code: Sugar fermentation stimulation protein homolog (238 aa).

Belongs to the SfsA family.

This Alteromonas mediterranea (strain DSM 17117 / CIP 110805 / LMG 28347 / Deep ecotype) protein is Sugar fermentation stimulation protein homolog.